An 885-amino-acid chain; its full sequence is MSTVEPNAYDPQQVETSAQQFWDATRAFQVDENSDKPKFYCLSMLPYPSGALHMGHVRNYTISDVVSRYKRMTGHNVLQPMGWDAFGLPAENAAIKNKTAPAKWTYANIEHMRAQLKSLGYAIDWSREFATCTPDYYVHEQRMFTRLMRKGLAYRRNAVVNWDPIDQTVLANEQVIDGRGWRSGALVEKREIPQWFLRITDYAQELLDGLDQLDGWPDSVKTMQRNWIGRSEGLEIQFDVRDTTGAALDPLRVFTTRPDTLMGVTFVSIAAEHPLAQHAAKSNPELASMLETLKHGGVSEAELETQEKRGMATGLTAVHPISGEEVPVWVANFVLMGYGTGAVMAVPGHDQRDFEFANKYGLPIVQVVKLREPRNDDEQAWDATQWRDWYTDKSRELELINSAEFDGLDYHGAFEALAERFERKGQGQRRINYRLRDWGVSRQRYWGCPIPVIYCAKCGAVPVPEDQLPVVLPENVEFAGTGSPIKTDPTWRQTTCPECGGPAERETDTFDTFMESSWYVARYTSPNARDMVDRRANYWMPADLYVGGIEHAILHLMYFRFYHKLMRDARLVDSDEPVTNLLTQGMVIAETFYRDADNGGKDWINPADVEIQRDERGRVVGASLIADGQPVHIGGTEKMSKSKNNGVDPQAMVAKYGADTVRLFSMFAAPPEQSLEWNEAGVDGMARFMRRLWVQVHKHVGEGIDDELTKIVALGGPLSAEQKAIRRKTHETIGKVDDDYGRRHSFNTAIAAVMELSNALAKFDDASAQGRAVRQEALEAMVLLLNPITPHASHALWQVLGRGETLLENVPFPQVDAAALVRDALTLAIQVNGKLRGTIEVAADAAREQIEALALAEPNAAKFLDGLSVRKIIIVPGKIVNIVAG.

A 'HIGH' region motif is present at residues 46–56 (PYPSGALHMGH). The short motif at 638–642 (KMSKS) is the 'KMSKS' region element. Lysine 641 provides a ligand contact to ATP.

It belongs to the class-I aminoacyl-tRNA synthetase family.

The protein resides in the cytoplasm. It catalyses the reaction tRNA(Leu) + L-leucine + ATP = L-leucyl-tRNA(Leu) + AMP + diphosphate. The protein is Leucine--tRNA ligase of Xanthomonas campestris pv. campestris (strain B100).